Consider the following 290-residue polypeptide: 33 kDa chaperonin (290 aa).

2 disulfides stabilise this stretch: Cys234-Cys236 and Cys267-Cys270.

The protein belongs to the HSP33 family. In terms of processing, under oxidizing conditions two disulfide bonds are formed involving the reactive cysteines. Under reducing conditions zinc is bound to the reactive cysteines and the protein is inactive.

The protein resides in the cytoplasm. Functionally, redox regulated molecular chaperone. Protects both thermally unfolding and oxidatively damaged proteins from irreversible aggregation. Plays an important role in the bacterial defense system toward oxidative stress. The chain is 33 kDa chaperonin from Colwellia psychrerythraea (strain 34H / ATCC BAA-681) (Vibrio psychroerythus).